Here is a 498-residue protein sequence, read N- to C-terminus: NADPH:adrenodoxin oxidoreductase, mitochondrial (498 aa).

The N-terminal 37 residues, 1–37, are a transit peptide targeting the mitochondrion; that stretch reads MSTHKAALCKVQILKLFLISARCVRITRFYGVCGLST. The FAD site is built by alanine 54, glutamate 75, leucine 83, and valine 119. NADP(+)-binding positions include 190 to 193, 234 to 235, and glutamate 246; these read QGNV and RR. FAD-binding positions include tryptophan 404 and 411 to 413; that span reads GVI. Glycine 411 lines the NADP(+) pocket. Basic and acidic residues predominate over residues 469–488; the sequence is DSEETRRGETRGKPREKMLD. Residues 469 to 489 form a disordered region; the sequence is DSEETRRGETRGKPREKMLDV.

It belongs to the ferredoxin--NADP reductase type 1 family. Requires FAD as cofactor.

Its subcellular location is the mitochondrion inner membrane. The enzyme catalyses 2 reduced [adrenodoxin] + NADP(+) + H(+) = 2 oxidized [adrenodoxin] + NADPH. The protein operates within steroid metabolism; cholesterol metabolism. Functionally, serves as the first electron transfer protein in all the mitochondrial P450 systems including cholesterol side chain cleavage in all steroidogenic tissues, steroid 11-beta hydroxylation in the adrenal cortex, 25-OH-vitamin D3-24 hydroxylation in the kidney, and sterol C-27 hydroxylation in the liver. The protein is NADPH:adrenodoxin oxidoreductase, mitochondrial (fdxr) of Salvelinus fontinalis (Brook trout).